A 265-amino-acid chain; its full sequence is Indole-3-glycerol phosphate synthase (265 aa).

The protein belongs to the TrpC family.

The catalysed reaction is 1-(2-carboxyphenylamino)-1-deoxy-D-ribulose 5-phosphate + H(+) = (1S,2R)-1-C-(indol-3-yl)glycerol 3-phosphate + CO2 + H2O. It functions in the pathway amino-acid biosynthesis; L-tryptophan biosynthesis; L-tryptophan from chorismate: step 4/5. The polypeptide is Indole-3-glycerol phosphate synthase (Xanthomonas oryzae pv. oryzae (strain PXO99A)).